The following is a 356-amino-acid chain: Tyrosine recombinase XerS (356 aa).

One can recognise a Core-binding (CB) domain in the interval 16–121; that stretch reads IMPWYVLEYY…ALSSLYKYLT (106 aa). The Tyr recombinase domain occupies 169–354; sequence GFLTYIDQEY…VNDEQKNALD (186 aa). Active-site residues include arginine 210, lysine 234, histidine 306, arginine 309, and histidine 332. Residue tyrosine 341 is the O-(3'-phospho-DNA)-tyrosine intermediate of the active site.

Belongs to the 'phage' integrase family. XerS subfamily.

Its subcellular location is the cytoplasm. With respect to regulation, ftsK is required for recombination. In terms of biological role, site-specific tyrosine recombinase, which acts by catalyzing the cutting and rejoining of the recombining DNA molecules. Essential to convert dimers of the bacterial chromosome into monomers to permit their segregation at cell division. In Streptococcus pneumoniae (strain Hungary19A-6), this protein is Tyrosine recombinase XerS.